Here is an 822-residue protein sequence, read N- to C-terminus: Tyrosine-protein kinase Fer (822 aa).

The region spanning 1 to 259 (MGFGSDLKNS…SVEQIDPSTE (259 aa)) is the F-BAR domain. The tract at residues 1–300 (MGFGSDLKNS…QANEIMWNNL (300 aa)) is important for interaction with membranes containing phosphoinositides. Coiled coils occupy residues 123-185 (AEMI…HNQY) and 301-390 (TAES…KVQE). Tyr402 bears the Phosphotyrosine mark. At Ser434 the chain carries Phosphoserine. The SH2 domain occupies 460 to 550 (WYHGAIPRIE…KSGVVLLNPI (91 aa)). The Protein kinase domain occupies 563–816 (VILGELLGKG…FSELQKELTI (254 aa)). Residues 569–577 (LGKGNFGEV) and Lys591 contribute to the ATP site. The residue at position 615 (Tyr615) is a Phosphotyrosine; by autocatalysis. Asp684 functions as the Proton acceptor in the catalytic mechanism. Tyr714 is subject to Phosphotyrosine; by autocatalysis.

It belongs to the protein kinase superfamily. Tyr protein kinase family. Fes/fps subfamily. Homotrimer. Interacts with ARHGDIA, IRS1, JAK1, NRP1, PIK3R1, PLEC and TMF1. Interacts with PPP1CA and regulates its phosphorylation at 'Thr-320'. Interacts with CTNND1, EGFR, FLT3, PECAM1, PDGFR and STAT3. Interacts (via SH2 domain) with CTTN. Interacts with HSP90; this stabilizes phosphorylated FER and protects FER against proteasomal degradation. Component of a complex that contains at least FER, CTTN and PTK2/FAK1. Autophosphorylated. Post-translationally, polyubiquitinated; this leads to proteasomal degradation. In terms of tissue distribution, isoform 1 is detected in normal colon and in fibroblasts (at protein level). Isoform 3 is detected in normal testis, in colon carcinoma-derived metastases in lung, liver and ovary, and in colon carcinoma and hepato carcinoma cell lines (at protein level). Isoform 3 is not detected in normal colon or in normal fibroblasts (at protein level). Widely expressed.

The protein resides in the cytoplasm. It is found in the cytoskeleton. Its subcellular location is the cell membrane. The protein localises to the cell projection. It localises to the cell junction. The protein resides in the membrane. It is found in the nucleus. Its subcellular location is the cell cortex. It catalyses the reaction L-tyrosyl-[protein] + ATP = O-phospho-L-tyrosyl-[protein] + ADP + H(+). Its activity is regulated as follows. Activated by phosphatidic acid binding. Activated by hydrogen peroxide (in vitro). Activated by reactive oxygen species (ROS). Its function is as follows. Tyrosine-protein kinase that acts downstream of cell surface receptors for growth factors and plays a role in the regulation of the actin cytoskeleton, microtubule assembly, lamellipodia formation, cell adhesion, cell migration and chemotaxis. Acts downstream of EGFR, KIT, PDGFRA and PDGFRB. Acts downstream of EGFR to promote activation of NF-kappa-B and cell proliferation. May play a role in the regulation of the mitotic cell cycle. Plays a role in the insulin receptor signaling pathway and in activation of phosphatidylinositol 3-kinase. Acts downstream of the activated FCER1 receptor and plays a role in FCER1 (high affinity immunoglobulin epsilon receptor)-mediated signaling in mast cells. Plays a role in the regulation of mast cell degranulation. Plays a role in leukocyte recruitment and diapedesis in response to bacterial lipopolysaccharide (LPS). Plays a role in synapse organization, trafficking of synaptic vesicles, the generation of excitatory postsynaptic currents and neuron-neuron synaptic transmission. Plays a role in neuronal cell death after brain damage. Phosphorylates CTTN, CTNND1, PTK2/FAK1, GAB1, PECAM1 and PTPN11. May phosphorylate JUP and PTPN1. Can phosphorylate STAT3, but the biological relevance of this depends on cell type and stimulus. This is Tyrosine-protein kinase Fer (FER) from Homo sapiens (Human).